The primary structure comprises 283 residues: Formamidopyrimidine-DNA glycosylase (283 aa).

Pro-2 functions as the Schiff-base intermediate with DNA in the catalytic mechanism. Glu-3 serves as the catalytic Proton donor. The Proton donor; for beta-elimination activity role is filled by Lys-58. Residues His-100, Arg-119, and Arg-162 each coordinate DNA. An FPG-type zinc finger spans residues 247–283 (DVYGREGEPCRRAGCDGTVQRITQSGRSSFYCAQCQR). Catalysis depends on Arg-273, which acts as the Proton donor; for delta-elimination activity.

This sequence belongs to the FPG family. In terms of assembly, monomer. Zn(2+) serves as cofactor.

The catalysed reaction is Hydrolysis of DNA containing ring-opened 7-methylguanine residues, releasing 2,6-diamino-4-hydroxy-5-(N-methyl)formamidopyrimidine.. It carries out the reaction 2'-deoxyribonucleotide-(2'-deoxyribose 5'-phosphate)-2'-deoxyribonucleotide-DNA = a 3'-end 2'-deoxyribonucleotide-(2,3-dehydro-2,3-deoxyribose 5'-phosphate)-DNA + a 5'-end 5'-phospho-2'-deoxyribonucleoside-DNA + H(+). Functionally, involved in base excision repair of DNA damaged by oxidation or by mutagenic agents. Acts as a DNA glycosylase that recognizes and removes damaged bases. Has a preference for oxidized purines, such as 7,8-dihydro-8-oxoguanine (8-oxoG). Has AP (apurinic/apyrimidinic) lyase activity and introduces nicks in the DNA strand. Cleaves the DNA backbone by beta-delta elimination to generate a single-strand break at the site of the removed base with both 3'- and 5'-phosphates. This chain is Formamidopyrimidine-DNA glycosylase, found in Ruegeria pomeroyi (strain ATCC 700808 / DSM 15171 / DSS-3) (Silicibacter pomeroyi).